Consider the following 127-residue polypeptide: Major sperm protein isoform beta (127 aa).

Alanine 2 bears the N-acetylalanine mark. In terms of domain architecture, MSP spans 9–126; sequence DINTQPGSKI…RRKNLPIEYN (118 aa).

Forms filaments 10 nm wide, with a characteristic substructure repeating axially at 9 nm. In terms of tissue distribution, sperm.

Its subcellular location is the cell projection. The protein localises to the pseudopodium. The protein resides in the cytoplasm. It localises to the cytoskeleton. Central component in molecular interactions underlying sperm crawling. Forms an extensive filament system that extends from sperm villipoda, along the leading edge of the pseudopod. This is Major sperm protein isoform beta from Ascaris suum (Pig roundworm).